The chain runs to 173 residues: Large ribosomal subunit protein uL16 (173 aa).

It belongs to the universal ribosomal protein uL16 family.

The protein is Large ribosomal subunit protein uL16 of Methanosphaerula palustris (strain ATCC BAA-1556 / DSM 19958 / E1-9c).